We begin with the raw amino-acid sequence, 232 residues long: Large ribosomal subunit protein uL1 (232 aa).

This sequence belongs to the universal ribosomal protein uL1 family. As to quaternary structure, part of the 50S ribosomal subunit.

Functionally, binds directly to 23S rRNA. The L1 stalk is quite mobile in the ribosome, and is involved in E site tRNA release. In terms of biological role, protein L1 is also a translational repressor protein, it controls the translation of the L11 operon by binding to its mRNA. In Thermosipho africanus (strain TCF52B), this protein is Large ribosomal subunit protein uL1.